The chain runs to 265 residues: Hydroxyethylthiazole kinase (265 aa).

Position 36 (methionine 36) interacts with substrate. Positions 112 and 160 each coordinate ATP. Glycine 187 serves as a coordination point for substrate.

Belongs to the Thz kinase family. It depends on Mg(2+) as a cofactor.

It carries out the reaction 5-(2-hydroxyethyl)-4-methylthiazole + ATP = 4-methyl-5-(2-phosphooxyethyl)-thiazole + ADP + H(+). Its pathway is cofactor biosynthesis; thiamine diphosphate biosynthesis; 4-methyl-5-(2-phosphoethyl)-thiazole from 5-(2-hydroxyethyl)-4-methylthiazole: step 1/1. Its function is as follows. Catalyzes the phosphorylation of the hydroxyl group of 4-methyl-5-beta-hydroxyethylthiazole (THZ). This is Hydroxyethylthiazole kinase from Clostridium perfringens (strain 13 / Type A).